Reading from the N-terminus, the 450-residue chain is Protein W (450 aa).

Residues 53 to 92 (SGESEQVEGGMSKDDGDVERRNLEDLSSTSPTDGTIGKRV) are disordered. The span at 63–76 (MSKDDGDVERRNLE) shows a compositional bias: basic and acidic residues. Phosphoserine; by host is present on Ser257. A disordered region spans residues 265–324 (ISPEDEEPSSVGGKPNESIGRTIEGQSIRDNLQAKDNKSTDVPGAGPKDSAVKEEPPQKR). Ser350 bears the Phosphoserine; by host mark. Disordered regions lie at residues 384–403 (VQTA…RGIP) and 429–450 (PGMF…RMSN). The span at 438 to 450 (TKKARVSMRRMSN) shows a compositional bias: basic residues. A Nuclear localization signal motif is present at residues 439 to 442 (KKAR).

In terms of assembly, interacts with host STAT1.

The protein localises to the host nucleus. Prevent the establishment of cellular antiviral state by blocking the interferon-alpha/beta (IFN-alpha/beta). Interacts with host STAT1 protein in the nucleus, blocking it's phosphorylation by IFN-alpha/beta. Also blocks antiviral state induced by Toll-like receptor 3/TLR3 binding to dsRNA. This is Protein W (P/V/C) from Cynopterus brachyotis (Lesser short-nosed fruit bat).